The following is a 444-amino-acid chain: Forkhead box protein F2 (444 aa).

Residues 32–98 (PAAAAAAAAA…KKASSGLRRP (67 aa)) form a disordered region. The segment covering 34 to 75 (AAAAAAAAPETTSSSSSSSSASCASSSSSSNSASAPSAACKS) has biased composition (low complexity). The segment covering 76-87 (AGGGGAGAGSGG) has biased composition (gly residues). A DNA-binding region (fork-head) is located at residues 99–190 (EKPPYSYIAL…EFMFEEGSFR (92 aa)). Disordered regions lie at residues 256–323 (GAGA…SPAM) and 338–367 (AHWS…SAGL). The span at 263-274 (AHPHHHHHHHVP) shows a compositional bias: basic residues. Residues 293 to 308 (GPGGVGAAGGGGGGDY) are compositionally biased toward gly residues. The span at 309–323 (GPDSSSSPVPSSPAM) shows a compositional bias: low complexity.

In terms of assembly, interacts with the transcription factors TBP and TFIIB. Lung and placenta. Predominantly expressed in gastrointestinal tract including stomach.

The protein localises to the nucleus. Its function is as follows. Probable transcription activator for a number of lung-specific genes. Mediates up-regulation of the E3 ligase IRF2BPL and drives ubiquitination and degradation of CTNNB1. The polypeptide is Forkhead box protein F2 (FOXF2) (Homo sapiens (Human)).